A 279-amino-acid polypeptide reads, in one-letter code: Thymidylate synthase (279 aa).

133–134 contributes to the dUMP binding site; it reads RR. Catalysis depends on C154, which acts as the Nucleophile. DUMP is bound by residues 178–181, N189, and 219–221; these read RSND and HIY. Residue D181 coordinates (6R)-5,10-methylene-5,6,7,8-tetrahydrofolate. A278 provides a ligand contact to (6R)-5,10-methylene-5,6,7,8-tetrahydrofolate.

Belongs to the thymidylate synthase family. Bacterial-type ThyA subfamily. Homodimer.

It is found in the cytoplasm. It carries out the reaction dUMP + (6R)-5,10-methylene-5,6,7,8-tetrahydrofolate = 7,8-dihydrofolate + dTMP. Its pathway is pyrimidine metabolism; dTTP biosynthesis. Catalyzes the reductive methylation of 2'-deoxyuridine-5'-monophosphate (dUMP) to 2'-deoxythymidine-5'-monophosphate (dTMP) while utilizing 5,10-methylenetetrahydrofolate (mTHF) as the methyl donor and reductant in the reaction, yielding dihydrofolate (DHF) as a by-product. This enzymatic reaction provides an intracellular de novo source of dTMP, an essential precursor for DNA biosynthesis. The sequence is that of Thymidylate synthase from Streptococcus pyogenes serotype M3 (strain SSI-1).